The chain runs to 1483 residues: Cystic fibrosis transmembrane conductance regulator (1483 aa).

Over Met-1–Phe-77 the chain is Cytoplasmic. Residues Phe-78–Gln-98 form a helical membrane-spanning segment. An ABC transmembrane type-1 1 domain is found at Phe-81–Leu-365. Residues Pro-99–Tyr-122 are Extracellular-facing. A helical transmembrane segment spans residues Leu-123–His-146. The Cytoplasmic segment spans residues His-147–Leu-195. A helical membrane pass occupies residues Ala-196–Trp-216. Residues Glu-217–Ser-222 lie on the Extracellular side of the membrane. The chain crosses the membrane as a helical span at residues Ala-223–Met-243. Residues Met-244–Lys-298 lie on the Cytoplasmic side of the membrane. A helical transmembrane segment spans residues Ala-299–Phe-319. Residues Leu-320–Thr-339 are Extracellular-facing. The chain crosses the membrane as a helical span at residues Ile-340–Val-358. The Cytoplasmic portion of the chain corresponds to Gln-359–Ser-859. ATP contacts are provided by residues Trp-401, Ser-434, Gly-458–Thr-465, and Gln-493. An ABC transporter 1 domain is found at Asn-423–Gly-646. The S-palmitoyl cysteine moiety is linked to residue Cys-524. Phosphoserine is present on residues Ser-549 and Ser-660. Positions Ser-654–Glu-832 are disordered R region. Phosphoserine; by PKA is present on Ser-670. Ser-686 is subject to Phosphoserine. Residue Lys-688 forms a Glycyl lysine isopeptide (Lys-Gly) (interchain with G-Cter in ubiquitin) linkage. Residues Ser-700 and Ser-712 each carry the phosphoserine modification. Position 717 is a phosphothreonine (Thr-717). 5 positions are modified to phosphoserine: Ser-737, Ser-768, Ser-791, Ser-796, and Ser-814. A helical membrane pass occupies residues Leu-860–Val-880. Positions Leu-860–Ser-1157 constitute an ABC transmembrane type-1 2 domain. The Extracellular portion of the chain corresponds to Phe-881–Ile-920. N-linked (GlcNAc...) asparagine glycosylation is found at Asn-895, Asn-901, Asn-902, and Asn-911. The discontinuously helical transmembrane segment at Tyr-921–His-941 threads the bilayer. Over Thr-942–Thr-992 the chain is Cytoplasmic. The helical transmembrane segment at Ile-993 to Leu-1013 threads the bilayer. The Extracellular portion of the chain corresponds to Glu-1014–Pro-1015. Residues Tyr-1016–Leu-1036 form a helical membrane-spanning segment. The Cytoplasmic portion of the chain corresponds to His-1037–Thr-1097. A helical transmembrane segment spans residues Leu-1098 to Phe-1118. Topologically, residues Ile-1119 to Gly-1132 are extracellular. Residues Ile-1133–Ile-1153 form a helical membrane-spanning segment. At Asp-1154 to Leu-1483 the chain is on the cytoplasmic side. The 234-residue stretch at Met-1213–Asn-1446 folds into the ABC transporter 2 domain. Residues Tyr-1222 and Gly-1247–Ser-1254 each bind ATP. The interval Arg-1389–Leu-1483 is interaction with GORASP2. Cys-1398 carries S-palmitoyl cysteine lipidation. Phosphoserine occurs at positions 1447 and 1459. Positions His-1455–Ser-1465 are enriched in basic residues. Residues His-1455–Leu-1483 form a disordered region. Residues Glu-1473 to Leu-1483 are compositionally biased toward acidic residues. The PDZ-binding signature appears at Thr-1481 to Leu-1483.

This sequence belongs to the ABC transporter superfamily. ABCC family. CFTR transporter (TC 3.A.1.202) subfamily. In terms of assembly, monomer; does not require oligomerization for channel activity. May form oligomers in the membrane. Interacts with SLC26A3, SLC26A6 and NHERF1. Interacts with SHANK2. Interacts with MYO6. Interacts (via C-terminus) with GOPC (via PDZ domain); this promotes CFTR internalization and thereby decreases channel activity. Interacts with SLC4A7 through NHERF1. Found in a complex with MYO5B and RAB11A. Interacts with ANO1. Interacts with SLC26A8. Interacts with AHCYL1; the interaction increases CFTR activity. Interacts with CSE1L. The core-glycosylated form interacts with GORASP2 (via PDZ GRASP-type 1 domain) in respone to ER stress. Interacts with MARCHF2; the interaction leads to CFTR ubiqtuitination and degradation. Interacts with ADGRG2. N-glycosylated. Post-translationally, phosphorylated; cAMP treatment promotes phosphorylation and activates the channel. Dephosphorylation decreases the ATPase activity (in vitro). Phosphorylation at PKA sites activates the channel. Phosphorylation at PKC sites enhances the response to phosphorylation by PKA. Phosphorylated by AMPK; this inhibits channel activity. In terms of processing, ubiquitinated, leading to its degradation in the lysosome. Deubiquitination by USP10 in early endosomes enhances its endocytic recycling to the cell membrane. Ubiquitinated by RNF185 during ER stress. Ubiquitinated by MARCHF2.

It localises to the apical cell membrane. Its subcellular location is the early endosome membrane. The protein resides in the cell membrane. It is found in the recycling endosome membrane. The protein localises to the endoplasmic reticulum membrane. It localises to the nucleus. It catalyses the reaction ATP + H2O + closed Cl(-) channel = ADP + phosphate + open Cl(-) channel.. It carries out the reaction chloride(in) = chloride(out). The catalysed reaction is hydrogencarbonate(in) = hydrogencarbonate(out). The enzyme catalyses ATP + H2O = ADP + phosphate + H(+). Its function is as follows. Epithelial ion channel that plays an important role in the regulation of epithelial ion and water transport and fluid homeostasis. Mediates the transport of chloride ions across the cell membrane. The ion channel is also permeable to HCO(3)(-); selectivity depends on the extracellular chloride concentration. Exerts its function also by modulating the activity of other ion channels and transporters. Contributes to the regulation of the pH and the ion content of the epithelial fluid layer. Modulates the activity of the epithelial sodium channel (ENaC) complex, in part by regulating the cell surface expression of the ENaC complex. May regulate bicarbonate secretion and salvage in epithelial cells by regulating the transporter SLC4A7. Can inhibit the chloride channel activity of ANO1. Plays a role in the chloride and bicarbonate homeostasis during sperm epididymal maturation and capacitation. This is Cystic fibrosis transmembrane conductance regulator from Atelerix albiventris (Middle-African hedgehog).